We begin with the raw amino-acid sequence, 227 residues long: MAHAAQMGLQDATSPIMEELISFHDHALMIIFLISFLVLYALFLTLTTKLTNTNITDAQEMETVWTILPAIILVLIALPSLRILYLTDEINDPSFTIKAIGHQWYWAYEYTDYGGLIFNSYMLPPLFLEPGDLRLLEVDNRVVLPIEAPVRMMITSQDVLHSWTVPSLGLKTDAIPGRLNQTTFTATRPGVYYGQCSEICGANHSFMPIVLELIPLKIFEMGPVFTL.

The Mitochondrial intermembrane portion of the chain corresponds to 1–14 (MAHAAQMGLQDATS). Residues 15–45 (PIMEELISFHDHALMIIFLISFLVLYALFLT) form a helical membrane-spanning segment. Over 46–59 (LTTKLTNTNITDAQ) the chain is Mitochondrial matrix. The helical transmembrane segment at 60–87 (EMETVWTILPAIILVLIALPSLRILYLT) threads the bilayer. Residues 88-227 (DEINDPSFTI…IFEMGPVFTL (140 aa)) lie on the Mitochondrial intermembrane side of the membrane. His161, Cys196, Glu198, Cys200, His204, and Met207 together coordinate Cu cation. Glu198 contributes to the Mg(2+) binding site.

It belongs to the cytochrome c oxidase subunit 2 family. In terms of assembly, component of the cytochrome c oxidase (complex IV, CIV), a multisubunit enzyme composed of 14 subunits. The complex is composed of a catalytic core of 3 subunits MT-CO1, MT-CO2 and MT-CO3, encoded in the mitochondrial DNA, and 11 supernumerary subunits COX4I, COX5A, COX5B, COX6A, COX6B, COX6C, COX7A, COX7B, COX7C, COX8 and NDUFA4, which are encoded in the nuclear genome. The complex exists as a monomer or a dimer and forms supercomplexes (SCs) in the inner mitochondrial membrane with NADH-ubiquinone oxidoreductase (complex I, CI) and ubiquinol-cytochrome c oxidoreductase (cytochrome b-c1 complex, complex III, CIII), resulting in different assemblies (supercomplex SCI(1)III(2)IV(1) and megacomplex MCI(2)III(2)IV(2)). Found in a complex with TMEM177, COA6, COX18, COX20, SCO1 and SCO2. Interacts with TMEM177 in a COX20-dependent manner. Interacts with COX20. Interacts with COX16. It depends on Cu cation as a cofactor.

It is found in the mitochondrion inner membrane. It carries out the reaction 4 Fe(II)-[cytochrome c] + O2 + 8 H(+)(in) = 4 Fe(III)-[cytochrome c] + 2 H2O + 4 H(+)(out). Component of the cytochrome c oxidase, the last enzyme in the mitochondrial electron transport chain which drives oxidative phosphorylation. The respiratory chain contains 3 multisubunit complexes succinate dehydrogenase (complex II, CII), ubiquinol-cytochrome c oxidoreductase (cytochrome b-c1 complex, complex III, CIII) and cytochrome c oxidase (complex IV, CIV), that cooperate to transfer electrons derived from NADH and succinate to molecular oxygen, creating an electrochemical gradient over the inner membrane that drives transmembrane transport and the ATP synthase. Cytochrome c oxidase is the component of the respiratory chain that catalyzes the reduction of oxygen to water. Electrons originating from reduced cytochrome c in the intermembrane space (IMS) are transferred via the dinuclear copper A center (CU(A)) of subunit 2 and heme A of subunit 1 to the active site in subunit 1, a binuclear center (BNC) formed by heme A3 and copper B (CU(B)). The BNC reduces molecular oxygen to 2 water molecules using 4 electrons from cytochrome c in the IMS and 4 protons from the mitochondrial matrix. In Symphalangus syndactylus (Siamang), this protein is Cytochrome c oxidase subunit 2 (MT-CO2).